Reading from the N-terminus, the 894-residue chain is Protein NLP9 (894 aa).

The 87-residue stretch at 517 to 603 folds into the RWP-RK domain; sequence QEISGARRLE…LDSVQGVEGG (87 aa). Positions 578–598 form a coiled coil; that stretch reads RKINKVNRSLRKIQTVLDSVQ. The disordered stretch occupies residues 732-763; the sequence is NTRIERGNGTVEPNHSISSSMSDSSNSSGAVL. Residues 747 to 763 show a composition bias toward low complexity; the sequence is SISSSMSDSSNSSGAVL. Residues 792-875 enclose the PB1 domain; that stretch reads TLTVKATYRE…HTVKFLVRDI (84 aa).

The protein localises to the nucleus. Functionally, probable transcription factor. The polypeptide is Protein NLP9 (NLP9) (Arabidopsis thaliana (Mouse-ear cress)).